We begin with the raw amino-acid sequence, 956 residues long: Bromodomain testis-specific protein (956 aa).

The region spanning Arg-26–Met-132 is the Bromo 1 domain. Ser-186 carries the phosphoserine modification. A Nuclear localization signal motif is present at residues Lys-208–Pro-219. The disordered stretch occupies residues Val-210–Pro-239. A compositionally biased stretch (polar residues) spans Thr-216–Pro-231. The 110-residue stretch at Val-266–Ile-375 folds into the Bromo 2 domain. Disordered stretches follow at residues Asn-391–Gln-420, Val-442–Tyr-508, Asn-607–Gln-747, and Leu-859–Ala-934. A compositionally biased stretch (low complexity) spans Ser-392–Ala-409. A coiled-coil region spans residues Glu-417–Val-442. Basic residues predominate over residues Arg-445–Val-463. One can recognise an NET domain in the interval Lys-496 to Pro-578. The segment covering Pro-625–Glu-640 has biased composition (pro residues). Over residues Asp-649 to Ser-688 the composition is skewed to low complexity. The span at Lys-714 to Thr-724 shows a compositional bias: polar residues. Residues Glu-844–Asp-940 adopt a coiled-coil conformation. Basic and acidic residues-rich tracts occupy residues Leu-859–Arg-874 and Leu-915–Ala-934.

It belongs to the BET family. Interacts with SMARCE1. Interacts with mRNA splicing machinery proteins SRSF2, DDX5, HNRNPK and TARDBP. Interacts with the acetylated N-terminus of histone H1, H2, H3 and H4. Interacts with P-TEFb components CDK9 and CCNT1/cyclin-T1. Ubiquitinated in a SPOP-dependent manner, leading to proteasomal degradation. Testis-specific. Expressed in germinal cells from the early meiotic (pachytene) spermatocytes and during spermiogenesis in the round and elongating spermatids until the condensed late spermatids. No expression seen in spermatogonia.

It is found in the nucleus. In terms of biological role, testis-specific chromatin protein that specifically binds histone H4 acetylated at 'Lys-5' and 'Lys-8' (H4K5ac and H4K8ac, respectively) and plays a key role in spermatogenesis. Required in late pachytene spermatocytes: plays a role in meiotic and post-meiotic cells by binding to acetylated histones at the promoter of specific meiotic and post-meiotic genes, facilitating their activation at the appropriate time. In the post-meiotic phase of spermatogenesis, binds to hyperacetylated histones and participates in their general removal from DNA. Also recognizes and binds a subset of butyrylated histones: able to bind histone H4 butyrylated at 'Lys-8' (H4K8ac), while it is not able to bind H4 butyrylated at 'Lys-5' (H4K5ac). Also acts as a component of the splicing machinery in pachytene spermatocytes and round spermatids and participates in 3'-UTR truncation of specific mRNAs in post-meiotic spermatids. Required for chromocenter organization, a structure comprised of peri-centromeric heterochromatin. This is Bromodomain testis-specific protein (Brdt) from Mus musculus (Mouse).